The sequence spans 332 residues: Ribosomal RNA small subunit methyltransferase C (332 aa).

The protein belongs to the methyltransferase superfamily. RsmC family. As to quaternary structure, monomer.

Its subcellular location is the cytoplasm. It catalyses the reaction guanosine(1207) in 16S rRNA + S-adenosyl-L-methionine = N(2)-methylguanosine(1207) in 16S rRNA + S-adenosyl-L-homocysteine + H(+). Its function is as follows. Specifically methylates the guanine in position 1207 of 16S rRNA in the 30S particle. The protein is Ribosomal RNA small subunit methyltransferase C of Pseudomonas paraeruginosa (strain DSM 24068 / PA7) (Pseudomonas aeruginosa (strain PA7)).